The chain runs to 365 residues: Aspartate-semialdehyde dehydrogenase (365 aa).

Residues Thr-15, Gly-16, Thr-17, Val-18, Ser-40, Ser-43, Leu-89, and Asp-90 each coordinate NADP(+). Cys-156 serves as the catalytic Acyl-thioester intermediate. Gly-188 is an NADP(+) binding site. Catalysis depends on His-255, which acts as the Proton acceptor. Asn-342 contributes to the NADP(+) binding site.

Belongs to the aspartate-semialdehyde dehydrogenase family. In terms of assembly, homotetramer; dimer of dimers.

It is found in the cytoplasm. It localises to the cytosol. Its subcellular location is the nucleus. It catalyses the reaction L-aspartate 4-semialdehyde + phosphate + NADP(+) = 4-phospho-L-aspartate + NADPH + H(+). Its pathway is amino-acid biosynthesis; L-methionine biosynthesis via de novo pathway; L-homoserine from L-aspartate: step 2/3. It participates in amino-acid biosynthesis; L-threonine biosynthesis; L-threonine from L-aspartate: step 2/5. Its activity is regulated as follows. Inhibited by the competitive inhibitor 1,4-benzoquinone and derivates such as 2-chloro-3-methoxy-1,4-naphthoquinone, 2,3-dichloro-1,4-naphthoquinone, 2-chloro-1,4-naphthoquinone, 2-bromo-1,4-naphthoquinone and 2,3-dichloro-5,8-dihydroxy-1,4-naphthoquinone. Functionally, catalyzes the NADPH-dependent formation of L-aspartate 4-semialdehyde (L-ASA) by the reductive dephosphorylation of 4-phospho-L-aspartate. Mediates the second step in the biosynthesis of amino acids that derive from aspartate (the aspartate family of amino acids), including methioinine and threonine, the latter of which is a precursor to isoleucine. The chain is Aspartate-semialdehyde dehydrogenase from Cryptococcus neoformans var. neoformans serotype D (strain JEC21 / ATCC MYA-565) (Filobasidiella neoformans).